A 338-amino-acid polypeptide reads, in one-letter code: Ornithine carbamoyltransferase (338 aa).

Carbamoyl phosphate is bound by residues 56–59 (STRT), Arg107, and 134–137 (HPTQ). Residues Asn168, Asp232, and 236-237 (SM) contribute to the L-ornithine site. Residues 274-275 (CL) and Arg320 each bind carbamoyl phosphate.

It belongs to the aspartate/ornithine carbamoyltransferase superfamily. OTCase family.

Its subcellular location is the cytoplasm. The enzyme catalyses carbamoyl phosphate + L-ornithine = L-citrulline + phosphate + H(+). It participates in amino-acid biosynthesis; L-arginine biosynthesis; L-arginine from L-ornithine and carbamoyl phosphate: step 1/3. Functionally, reversibly catalyzes the transfer of the carbamoyl group from carbamoyl phosphate (CP) to the N(epsilon) atom of ornithine (ORN) to produce L-citrulline. The sequence is that of Ornithine carbamoyltransferase (argI) from Buchnera aphidicola subsp. Schizaphis graminum (strain Sg).